We begin with the raw amino-acid sequence, 125 residues long: Gem-associated protein 7 (125 aa).

The residue at position 1 (methionine 1) is an N-acetylmethionine. In terms of domain architecture, SUZ-C spans methionine 1 to glycine 29. The tract at residues methionine 1 to alanine 52 is disordered. Residue threonine 3 is modified to Phosphothreonine. Residues arginine 59–proline 125 form the Sm domain.

This sequence belongs to the gemin-7 family. As to quaternary structure, part of the core SMN complex that contains SMN1, GEMIN2/SIP1, DDX20/GEMIN3, GEMIN4, GEMIN5, GEMIN6, GEMIN7, GEMIN8 and STRAP/UNRIP. Part of the SMN-Sm complex that contains SMN1, GEMIN2/SIP1, DDX20/GEMIN3, GEMIN4, GEMIN5, GEMIN6, GEMIN7, GEMIN8, STRAP/UNRIP and the Sm proteins SNRPB, SNRPD1, SNRPD2, SNRPD3, SNRPE, SNRPF and SNRPG. Interacts with GEMIN6; the interaction is direct. Interacts with STRAP/UNRIP; the interaction is direct. Interacts with GEMIN8; the interaction is direct. Interacts with SNRPB, SNRPD2, SNRPD3 and SNRPE; the interaction is direct.

The protein localises to the nucleus. It is found in the nucleoplasm. Its subcellular location is the gem. The protein resides in the cytoplasm. In terms of biological role, the SMN complex catalyzes the assembly of small nuclear ribonucleoproteins (snRNPs), the building blocks of the spliceosome, and thereby plays an important role in the splicing of cellular pre-mRNAs. Most spliceosomal snRNPs contain a common set of Sm proteins SNRPB, SNRPD1, SNRPD2, SNRPD3, SNRPE, SNRPF and SNRPG that assemble in a heptameric protein ring on the Sm site of the small nuclear RNA to form the core snRNP (Sm core). In the cytosol, the Sm proteins SNRPD1, SNRPD2, SNRPE, SNRPF and SNRPG are trapped in an inactive 6S pICln-Sm complex by the chaperone CLNS1A that controls the assembly of the core snRNP. To assemble core snRNPs, the SMN complex accepts the trapped 5Sm proteins from CLNS1A forming an intermediate. Binding of snRNA inside 5Sm triggers eviction of the SMN complex, thereby allowing binding of SNRPD3 and SNRPB to complete assembly of the core snRNP. This Bos taurus (Bovine) protein is Gem-associated protein 7 (GEMIN7).